A 745-amino-acid chain; its full sequence is GTPase-activating protein GYP7 (745 aa).

The region spanning 391–623 (LADDATRKEV…NIWEVFFTDF (233 aa)) is the Rab-GAP TBC domain.

Functionally, most effectively accelerate the intrinsic GTPase activity of YPT7. It is also active, but to a lesser extent, on YPT31, YPT32 and YPT1. YPT6 and SEC4. In Candida glabrata (strain ATCC 2001 / BCRC 20586 / JCM 3761 / NBRC 0622 / NRRL Y-65 / CBS 138) (Yeast), this protein is GTPase-activating protein GYP7 (GYP7).